The sequence spans 363 residues: MNTEASQDQTVTETPGVRLRQARESLGLTQQTVAERLCLKVSTIRDIEEDNAQANLASTFHRGYIRSYAKLVHLPEDELLPILEKQAPVRAAKVAPMQSFSLGKKHKKRDGWLMSFTWLIVLVVLGLTGAWWWQNHQAQQAEIANMVDQSSAQLSQNGGQPVPLTDDNRDAIAPTDAPAPVANGQPVPLTNHSVSAITNSAPTTSSVPTTSSATTSSVPTTSSVPKINSTEPVDTANTNTTMHQEGAASAAVSPSQVPQPGMPTGQPPLPTADAGVSGSASSVGALVMNFTADCWLQVVDATGKTLFSGIQKGGAVLNLAGKAPYKLTIGAPGALTISYQGNPVDLSKFIKANRVARLTVGVE.

Residues 1-111 (MNTEASQDQT…LGKKHKKRDG (111 aa)) are Cytoplasmic-facing. Residues 19–79 (LRQARESLGL…KLVHLPEDEL (61 aa)) form the HTH cro/C1-type domain. A DNA-binding region (H-T-H motif) is located at residues 30-49 (QQTVAERLCLKVSTIRDIEE). The helical; Signal-anchor for type II membrane protein transmembrane segment at 112–132 (WLMSFTWLIVLVVLGLTGAWW) threads the bilayer. The Periplasmic portion of the chain corresponds to 133 to 363 (WQNHQAQQAE…RVARLTVGVE (231 aa)). Residues 151–277 (SAQLSQNGGQ…PLPTADAGVS (127 aa)) are disordered. Polar residues predominate over residues 188–199 (PLTNHSVSAITN). The segment covering 200–225 (SAPTTSSVPTTSSATTSSVPTTSSVP) has biased composition (low complexity). The segment covering 226 to 243 (KINSTEPVDTANTNTTMH) has biased composition (polar residues). Over residues 247–259 (AASAAVSPSQVPQ) the composition is skewed to low complexity.

The protein belongs to the RodZ family.

Its subcellular location is the cell inner membrane. Functionally, cytoskeletal protein that is involved in cell-shape control through regulation of the length of the long axis. This Yersinia pseudotuberculosis serotype O:1b (strain IP 31758) protein is Cytoskeleton protein RodZ.